Reading from the N-terminus, the 74-residue chain is uncharacterized protein (74 aa).

This sequence to U.parvum UU416.

This is an uncharacterized protein from Mycoplasma pneumoniae (strain ATCC 29342 / M129 / Subtype 1) (Mycoplasmoides pneumoniae).